The sequence spans 1366 residues: Protein strawberry notch homolog 2 (1366 aa).

4 disordered regions span residues M1–L24, Q174–P217, S614–R640, and H1324–L1366. Residues H15–L24 show a composition bias toward pro residues. The span at P182 to E194 shows a compositional bias: acidic residues. Residues S614–K637 show a composition bias toward basic residues. Residues L1333–P1347 show a composition bias toward gly residues.

It belongs to the SBNO family. In terms of assembly, interacts with TAL1; this interaction inhibits TAL1 occupancy of the DCSTAMP promoter, leading to the activation of the DCSTAMP promoter by the transcription factor MITF. In terms of tissue distribution, detected in macrophages. IL10 regulates expression in a STAT3-dependent way.

Its function is as follows. Acts as a transcriptional coregulator, that can have both coactivator and corepressor functions. Inhibits the DCSTAMP-repressive activity of TAL1, hence enhancing the access of the transcription factor MITF to the DC-STAMP promoter in osteoclast. Plays a role in bone homeostasis; required as a positive regulator in TNFSF11//RANKL-mediated osteoclast fusion via a DCSTAMP-dependent pathway. May also be required in the regulation of osteoblast differentiation. Involved in the transcriptional corepression of NF-kappaB in macrophages. Plays a role as a regulator in the pro-inflammatory cascade. The sequence is that of Protein strawberry notch homolog 2 (SBNO2) from Homo sapiens (Human).